The primary structure comprises 347 residues: NADH-ubiquinone oxidoreductase chain 2 (347 aa).

9 helical membrane-spanning segments follow: residues 3 to 23 (PPILIIIMFTVISGTIMVLMS), 25 to 45 (HWLMIWIGFEMNMLAIIPILM), 67 to 87 (SMLLMLGIIMNLLLTGQWAVL), 150 to 170 (NPHLLMTMALMSVLVGGWGGL), 178 to 198 (ILAYSSIAHMGWMIAVMTYSP), 201 to 221 (MLLNLSIYITMTLGTFMLFMF), 237 to 257 (LPLITSLILIIMLSLGGLPPL), 274 to 294 (NMIITTMLMTITALLNLYFYM), and 323 to 343 (MTMLPPLIVISTMLLPLTPMM).

Belongs to the complex I subunit 2 family. In terms of assembly, core subunit of respiratory chain NADH dehydrogenase (Complex I) which is composed of 45 different subunits. Interacts with TMEM242.

The protein resides in the mitochondrion inner membrane. It carries out the reaction a ubiquinone + NADH + 5 H(+)(in) = a ubiquinol + NAD(+) + 4 H(+)(out). Functionally, core subunit of the mitochondrial membrane respiratory chain NADH dehydrogenase (Complex I) which catalyzes electron transfer from NADH through the respiratory chain, using ubiquinone as an electron acceptor. Essential for the catalytic activity and assembly of complex I. In Mustela kathiah (Yellow-bellied weasel), this protein is NADH-ubiquinone oxidoreductase chain 2.